A 300-amino-acid chain; its full sequence is Tyrosine recombinase XerD (300 aa).

In terms of domain architecture, Core-binding (CB) spans 6–89; it reads LFHKRLIEQF…ALKVFFHFLK (84 aa). The 186-residue stretch at 108–293 folds into the Tyr recombinase domain; sequence RLPSILSTEE…ASESLIEKFH (186 aa). Active-site residues include Arg-152, Lys-174, His-245, Arg-248, and His-271. Tyr-280 acts as the O-(3'-phospho-DNA)-tyrosine intermediate in catalysis.

The protein belongs to the 'phage' integrase family. XerD subfamily. In terms of assembly, forms a cyclic heterotetrameric complex composed of two molecules of XerC and two molecules of XerD.

It is found in the cytoplasm. Its function is as follows. Site-specific tyrosine recombinase, which acts by catalyzing the cutting and rejoining of the recombining DNA molecules. The XerC-XerD complex is essential to convert dimers of the bacterial chromosome into monomers to permit their segregation at cell division. It also contributes to the segregational stability of plasmids. In Chlamydia trachomatis serovar D (strain ATCC VR-885 / DSM 19411 / UW-3/Cx), this protein is Tyrosine recombinase XerD.